Consider the following 246-residue polypeptide: Carboxy-S-adenosyl-L-methionine synthase (246 aa).

S-adenosyl-L-methionine contacts are provided by residues tyrosine 39, 64-66 (GCS), 89-90 (DN), 117-118 (DI), asparagine 132, and arginine 199.

This sequence belongs to the class I-like SAM-binding methyltransferase superfamily. Cx-SAM synthase family. As to quaternary structure, homodimer.

It catalyses the reaction prephenate + S-adenosyl-L-methionine = carboxy-S-adenosyl-L-methionine + 3-phenylpyruvate + H2O. In terms of biological role, catalyzes the conversion of S-adenosyl-L-methionine (SAM) to carboxy-S-adenosyl-L-methionine (Cx-SAM). The protein is Carboxy-S-adenosyl-L-methionine synthase of Erwinia tasmaniensis (strain DSM 17950 / CFBP 7177 / CIP 109463 / NCPPB 4357 / Et1/99).